Reading from the N-terminus, the 91-residue chain is MTRSAKKGPFCDAHLLKKVEAAVGGKDKKPIKTWSRRSTIMPEFIGLTIAVHNGRQHVPVYVTENMVGHKLGEFALTRTFKGHAADKKAKR.

The protein belongs to the universal ribosomal protein uS19 family.

Protein S19 forms a complex with S13 that binds strongly to the 16S ribosomal RNA. The protein is Small ribosomal subunit protein uS19 of Cupriavidus pinatubonensis (strain JMP 134 / LMG 1197) (Cupriavidus necator (strain JMP 134)).